Here is a 1464-residue protein sequence, read N- to C-terminus: Sister chromatid cohesion protein PDS5 homolog B-B (1464 aa).

The stretch at 383–419 is one HEAT repeat; the sequence is LLVNDQLLNFVRERTLDKRWRVRKEAMMGLAQIYKKY. The tract at residues 1126 to 1464 is disordered; sequence KSTNVLGAVN…MKSELEGPLL (339 aa). The segment covering 1137–1155 has biased composition (polar residues); that stretch reads PLSSAGKQMQSKSSRMETV. Over residues 1156-1168 the composition is skewed to low complexity; it reads SNASSGSNPSSPG. Acidic residues predominate over residues 1177–1186; that stretch reads TELDQIEYED. Basic and acidic residues-rich tracts occupy residues 1197–1215, 1234–1244, and 1265–1274; these read KKSDKRDDSDLLKSEVEKP, ELSKPAQEPKS, and WQEKRLKEDL. The span at 1286 to 1295 shows a compositional bias: basic residues; the sequence is KKGRRGRPPK. Positions 1287–1299 form a DNA-binding region, a.T hook 1; that stretch reads KGRRGRPPKSAKM. Over residues 1325–1342 the composition is skewed to acidic residues; that stretch reads PTDEEDHLEISEEQDSEN. A compositionally biased stretch (basic residues) spans 1347-1357; it reads RKGRGSSKKTP. Over residues 1359–1373 the composition is skewed to polar residues; the sequence is KSDSTDSALDTSRPT. 2 DNA-binding regions (a.T hook) span residues 1375–1387 and 1391–1403; these read QKRRGRPPKTPTV and KSHVGRPRKVVSK. Basic residues predominate over residues 1390-1400; it reads KKSHVGRPRKV. Over residues 1425 to 1435 the composition is skewed to acidic residues; sequence SNEEETADEEV. Residues 1441–1453 are compositionally biased toward basic residues; that stretch reads GRRRTAKKRRWIQ. Over residues 1455–1464 the composition is skewed to basic and acidic residues; it reads MKSELEGPLL.

The protein belongs to the PDS5 family. In terms of assembly, interacts with the cohesin complex. Post-translationally, phosphorylated in mitotic cells.

It localises to the nucleus. Functionally, plays a role in androgen-induced proliferative arrest. Required for maintenance of sister chromatid cohesion during mitosis. This Xenopus laevis (African clawed frog) protein is Sister chromatid cohesion protein PDS5 homolog B-B (pds5b-b).